The following is a 196-amino-acid chain: Nucleoid occlusion factor SlmA (196 aa).

In terms of domain architecture, HTH tetR-type spans 7 to 68 (TNRREEILQA…GLIEFIEEAL (62 aa)). A DNA-binding region (H-T-H motif) is located at residues 31 to 50 (TTAKLAKQVGVSEAALYRHF). The stretch at 110 to 142 (HALMFENERLRDRINQLFERIETQLRQILRERK) forms a coiled coil.

The protein belongs to the nucleoid occlusion factor SlmA family. In terms of assembly, homodimer. Interacts with FtsZ.

The protein resides in the cytoplasm. It is found in the nucleoid. Its function is as follows. Required for nucleoid occlusion (NO) phenomenon, which prevents Z-ring formation and cell division over the nucleoid. Acts as a DNA-associated cell division inhibitor that binds simultaneously chromosomal DNA and FtsZ, and disrupts the assembly of FtsZ polymers. SlmA-DNA-binding sequences (SBS) are dispersed on non-Ter regions of the chromosome, preventing FtsZ polymerization at these regions. This Vibrio campbellii (strain ATCC BAA-1116) protein is Nucleoid occlusion factor SlmA.